A 275-amino-acid chain; its full sequence is Elongation factor Ts (275 aa).

An involved in Mg(2+) ion dislocation from EF-Tu region spans residues 80–83 (TDFV).

The protein belongs to the EF-Ts family.

Its subcellular location is the cytoplasm. Functionally, associates with the EF-Tu.GDP complex and induces the exchange of GDP to GTP. It remains bound to the aminoacyl-tRNA.EF-Tu.GTP complex up to the GTP hydrolysis stage on the ribosome. The sequence is that of Elongation factor Ts from Clavibacter sepedonicus (Clavibacter michiganensis subsp. sepedonicus).